Consider the following 359-residue polypeptide: UbiA prenyltransferase domain-containing protein 1 homolog (359 aa).

A compositionally biased stretch (polar residues) spans 1-16; it reads MATSSQLLPNGNLSRN. The tract at residues 1 to 23 is disordered; it reads MATSSQLLPNGNLSRNGKTKTED. A run of 8 helical transmembrane segments spans residues 67–89, 98–118, 148–168, 177–197, 200–220, 262–284, 289–311, and 335–355; these read ALRPWSLSASLVPTLLGSALAYR, LATFFLTAFTVVTVHCAGNVV, VVSLGAILYMAGCGGFVLLAV, LALIYFGGLSSSFLYTGGIGF, IALGDLVILILFGPISVLFAF, IVTLAILIGRTASHVLYAMLLFA, FFIFGLKYSLWFLLPLVTLPQAF, and FFFGILYVVACCCAHQLPTFG.

This sequence belongs to the UbiA prenyltransferase family.

The protein localises to the mitochondrion membrane. It participates in quinol/quinone metabolism; menaquinone biosynthesis. In terms of biological role, prenyltransferase that mediates the formation of menaquinone-4 (MK-4), a vitamin K2 isoform, thereby acting as a mitochondrial electron carrier. Mediates the conversion of phylloquinone (PK) into MK-4, probably by cleaving the side chain of phylloquinone (PK) to release 2-methyl-1,4-naphthoquinone (menadione; K3) and then prenylating it with geranylgeranyl pyrophosphate (GGPP) to form MK-4. MK-4 acts as a membrane electron carrier downstream of a electron transport chain complex, improving mitochondrial oxygen consumption. This Drosophila melanogaster (Fruit fly) protein is UbiA prenyltransferase domain-containing protein 1 homolog (heix).